Consider the following 227-residue polypeptide: 2,3-bisphosphoglycerate-dependent phosphoglycerate mutase (227 aa).

Residues 7-14, 20-21, Arg-59, 86-89, Lys-97, 113-114, and 182-183 contribute to the substrate site; these read RHGFSEWN, TG, ERHY, RR, and GN. Residue His-8 is the Tele-phosphohistidine intermediate of the active site. Glu-86 acts as the Proton donor/acceptor in catalysis.

It belongs to the phosphoglycerate mutase family. BPG-dependent PGAM subfamily. As to quaternary structure, homodimer.

It catalyses the reaction (2R)-2-phosphoglycerate = (2R)-3-phosphoglycerate. Its pathway is carbohydrate degradation; glycolysis; pyruvate from D-glyceraldehyde 3-phosphate: step 3/5. In terms of biological role, catalyzes the interconversion of 2-phosphoglycerate and 3-phosphoglycerate. In Haemophilus ducreyi (strain 35000HP / ATCC 700724), this protein is 2,3-bisphosphoglycerate-dependent phosphoglycerate mutase.